Reading from the N-terminus, the 426-residue chain is 3-phosphoshikimate 1-carboxyvinyltransferase (426 aa).

Lysine 22, serine 23, and arginine 27 together coordinate 3-phosphoshikimate. Residue lysine 22 coordinates phosphoenolpyruvate. Phosphoenolpyruvate is bound by residues glycine 96 and arginine 124. 3-phosphoshikimate contacts are provided by serine 170, serine 171, glutamine 172, serine 198, aspartate 314, asparagine 337, and lysine 341. Residue glutamine 172 coordinates phosphoenolpyruvate. Aspartate 314 acts as the Proton acceptor in catalysis. Arginine 345, arginine 387, and lysine 412 together coordinate phosphoenolpyruvate.

Belongs to the EPSP synthase family. As to quaternary structure, monomer.

Its subcellular location is the cytoplasm. The catalysed reaction is 3-phosphoshikimate + phosphoenolpyruvate = 5-O-(1-carboxyvinyl)-3-phosphoshikimate + phosphate. The protein operates within metabolic intermediate biosynthesis; chorismate biosynthesis; chorismate from D-erythrose 4-phosphate and phosphoenolpyruvate: step 6/7. Catalyzes the transfer of the enolpyruvyl moiety of phosphoenolpyruvate (PEP) to the 5-hydroxyl of shikimate-3-phosphate (S3P) to produce enolpyruvyl shikimate-3-phosphate and inorganic phosphate. This chain is 3-phosphoshikimate 1-carboxyvinyltransferase, found in Shewanella baltica (strain OS155 / ATCC BAA-1091).